The sequence spans 164 residues: Thiol peroxidase (164 aa).

Residues 18 to 163 (VSEGQHAPDF…FDAALEAYRN (146 aa)) form the Thioredoxin domain. The Cysteine sulfenic acid (-SOH) intermediate role is filled by C60. A disulfide bridge connects residues C60 and C93.

Belongs to the peroxiredoxin family. Tpx subfamily. In terms of assembly, homodimer.

It catalyses the reaction a hydroperoxide + [thioredoxin]-dithiol = an alcohol + [thioredoxin]-disulfide + H2O. Thiol-specific peroxidase that catalyzes the reduction of hydrogen peroxide and organic hydroperoxides to water and alcohols, respectively. Plays a role in cell protection against oxidative stress by detoxifying peroxides. The chain is Thiol peroxidase from Staphylococcus haemolyticus (strain JCSC1435).